We begin with the raw amino-acid sequence, 475 residues long: UDP-glycosyltransferase 101 (475 aa).

The Proton acceptor role is filled by histidine 15. Histidine 15 is an an anthocyanidin binding site. The active-site Charge relay is aspartate 117. UDP-alpha-D-glucose-binding residues include alanine 345, glutamine 347, histidine 362, tryptophan 365, asparagine 366, serine 367, and glutamate 370. Glycine 385 contributes to the an anthocyanidin binding site. UDP-alpha-D-glucose contacts are provided by glutamate 386 and glutamine 387.

Belongs to the UDP-glycosyltransferase family.

It catalyses the reaction (20S)-protopanaxadiol + UDP-alpha-D-glucose = (20S)-ginsenoside C-K + UDP + H(+). The catalysed reaction is (20S)-ginsenoside Rg3 + UDP-alpha-D-glucose = (20S)-ginsenoside Rd + UDP + H(+). It carries out the reaction (20S)-protopanaxatriol + UDP-alpha-D-glucose = (20S)-ginsenoside F1 + UDP + H(+). The enzyme catalyses (20S)-ginsenoside F1 + UDP-alpha-D-glucose = (20S)-ginsenoside Rg1 + UDP + H(+). It participates in secondary metabolite biosynthesis; terpenoid biosynthesis. In terms of biological role, component of the dammarane-type triterpene saponins (e.g. ginsenosides or panaxosides) biosynthetic pathway. Glycosyltransferase that catalyzes the biosynthesis of ginsenoside F1 from protopanaxatriol (PPT) and the conversion of ginsenoside F1 to ginsenoside Rg1. Triggers C20-OH glycosylation of ginsenoside Rg3 to produce ginsenoside Rd. Mediates the conversion of protopanaxadiol (PPD) to the ginsenoside compound K. The protein is UDP-glycosyltransferase 101 of Panax ginseng (Korean ginseng).